A 930-amino-acid polypeptide reads, in one-letter code: Carnosine synthase 1 (930 aa).

The segment at methionine 1–glutamate 24 is disordered. One can recognise an ATP-grasp domain in the interval arginine 624 to leucine 825. Valine 650–aspartate 716 serves as a coordination point for ATP. Mg(2+) is bound by residues glutamate 782, glutamate 794, and asparagine 796. Residues glutamate 782, glutamate 794, and asparagine 796 each contribute to the Mn(2+) site.

Homotetramer. The cofactor is Mg(2+). Mn(2+) is required as a cofactor.

The enzyme catalyses beta-alanine + L-histidine + ATP = carnosine + ADP + phosphate + H(+). It catalyses the reaction 4-aminobutanoate + L-histidine + ATP = L-homocarnosine + ADP + phosphate + H(+). Catalyzes the synthesis of carnosine and homocarnosine. Carnosine is synthesized more efficiently than homocarnosine. This Gallus gallus (Chicken) protein is Carnosine synthase 1.